The sequence spans 178 residues: Large ribosomal subunit protein uL10 (178 aa).

The protein belongs to the universal ribosomal protein uL10 family. In terms of assembly, part of the ribosomal stalk of the 50S ribosomal subunit. The N-terminus interacts with L11 and the large rRNA to form the base of the stalk. The C-terminus forms an elongated spine to which L12 dimers bind in a sequential fashion forming a multimeric L10(L12)X complex.

Its function is as follows. Forms part of the ribosomal stalk, playing a central role in the interaction of the ribosome with GTP-bound translation factors. This Stenotrophomonas maltophilia (strain R551-3) protein is Large ribosomal subunit protein uL10.